Consider the following 180-residue polypeptide: MEYKTPFIAKKLGVSPKAVVRIAQQLNLTIEKNKYGHFIFTQEDVDQMLEHHRFQIEQSQNSQSTQKASSNEVEELKTQVNTIVQNISSNDFEQLANQLNTITRRLDRMEEQMQDKANDVVTYQLLQHRREMEEMLERIQKLEAALTKEEPIYITPDSKPTYEREKKPKRRKMIFSIFGL.

The segment at residues 5–25 (TPFIAKKLGVSPKAVVRIAQQ) is a DNA-binding region (H-T-H motif). The stretch at 67–151 (KASSNEVEEL…LEAALTKEEP (85 aa)) forms a coiled coil.

The protein belongs to the RacA family.

Its subcellular location is the cytoplasm. Functionally, required for the formation of axial filaments and for anchoring the origin regions at the cell poles in sporulating cells, thus ensuring proper chromosome segregation in the prespore. Binds in a dispersed manner throughout the chromosome but preferentially to sites clustered in the origin portion of the chromosome, causing condensation of the chromosome and its remodeling into an elongated, anchored structure. This is Chromosome-anchoring protein RacA from Bacillus cereus (strain B4264).